Consider the following 511-residue polypeptide: MASDSSFPGASSNVAEYSVSEISGALKRTVEDTFGHVRVRGEISGYRGPHSSGHAYFALKDDRARLEAVIWRGSMSRLRFRPEEGMEVIATGKLTTYPGSSKYQIVIEQMEPAGAGALMALLEERKQRLAAEGLFDPALKQLLPFMPRVIGVVTSPTGAVIRDIIHRISDRYPLRVIVWPVRVQGDTCGPEVATAVNGFNTLPDDGPIPRPDVLIVARGGGSLEDLWGFNDEIVVRAVAASHIPVISAVGHETDWTLIDLAADMRAPTPTGAAEMAVPVKADLQASLASQSARLSSAMSRFFDQKRQAHRAAARAMPSADQLLALPRRRFDEAASRLTRALFVNTQKKRVHFDGHARQLSPRLLQRRLVELERGVTMLGQRLPRALEAFLRERRTAFTHRANRLSPEPILRRTRLTGSTLEQLDRRRDQAVRLLIERVKRRSQELDRLMRTLSYESVLERGFAVVFDAQGKPVKQAAAVLPGDALSVRFRDGDVGVVARAGLTIPDPTKGQ.

Belongs to the XseA family. In terms of assembly, heterooligomer composed of large and small subunits.

It is found in the cytoplasm. The enzyme catalyses Exonucleolytic cleavage in either 5'- to 3'- or 3'- to 5'-direction to yield nucleoside 5'-phosphates.. Functionally, bidirectionally degrades single-stranded DNA into large acid-insoluble oligonucleotides, which are then degraded further into small acid-soluble oligonucleotides. In Brucella suis biovar 1 (strain 1330), this protein is Exodeoxyribonuclease 7 large subunit.